Consider the following 94-residue polypeptide: Aspartyl/glutamyl-tRNA(Asn/Gln) amidotransferase subunit C (94 aa).

The protein belongs to the GatC family. Heterotrimer of A, B and C subunits.

It carries out the reaction L-glutamyl-tRNA(Gln) + L-glutamine + ATP + H2O = L-glutaminyl-tRNA(Gln) + L-glutamate + ADP + phosphate + H(+). The enzyme catalyses L-aspartyl-tRNA(Asn) + L-glutamine + ATP + H2O = L-asparaginyl-tRNA(Asn) + L-glutamate + ADP + phosphate + 2 H(+). Functionally, allows the formation of correctly charged Asn-tRNA(Asn) or Gln-tRNA(Gln) through the transamidation of misacylated Asp-tRNA(Asn) or Glu-tRNA(Gln) in organisms which lack either or both of asparaginyl-tRNA or glutaminyl-tRNA synthetases. The reaction takes place in the presence of glutamine and ATP through an activated phospho-Asp-tRNA(Asn) or phospho-Glu-tRNA(Gln). This is Aspartyl/glutamyl-tRNA(Asn/Gln) amidotransferase subunit C from Desulfitobacterium hafniense (strain DSM 10664 / DCB-2).